The primary structure comprises 678 residues: Ribonuclease Z 2, mitochondrial (678 aa).

The N-terminal 37 residues, 1–37 (MKASLLVPRRALLFGQLLPPKYSWYSVKRWQSQLTFR), are a transit peptide targeting the mitochondrion.

Belongs to the RNase Z family. It depends on Zn(2+) as a cofactor.

Its subcellular location is the mitochondrion. It localises to the cytoplasm. It catalyses the reaction Endonucleolytic cleavage of RNA, removing extra 3' nucleotides from tRNA precursor, generating 3' termini of tRNAs. A 3'-hydroxy group is left at the tRNA terminus and a 5'-phosphoryl group is left at the trailer molecule.. In terms of biological role, zinc phosphodiesterase, which displays some tRNA 3'-processing endonuclease activity. May be involved in tRNA maturation, by removing a 3'-trailer from precursor tRNA. This chain is Ribonuclease Z 2, mitochondrial (trz2), found in Schizosaccharomyces pombe (strain 972 / ATCC 24843) (Fission yeast).